A 151-amino-acid polypeptide reads, in one-letter code: Small ribosomal subunit protein uS11 (151 aa).

The tract at residues 130–151 (EDVTPIPSDSTRRKGGRRGRRL) is disordered. The segment covering 142–151 (RKGGRRGRRL) has biased composition (basic residues).

It belongs to the universal ribosomal protein uS11 family.

This chain is Small ribosomal subunit protein uS11, found in Aedes aegypti (Yellowfever mosquito).